We begin with the raw amino-acid sequence, 637 residues long: tRNA uridine 5-carboxymethylaminomethyl modification enzyme MnmG (637 aa).

14-19 (GAGHAG) is a binding site for FAD. Residue 279-293 (GPRYCPSIEDKVVRF) coordinates NAD(+).

The protein belongs to the MnmG family. Homodimer. Heterotetramer of two MnmE and two MnmG subunits. FAD is required as a cofactor.

The protein resides in the cytoplasm. Its function is as follows. NAD-binding protein involved in the addition of a carboxymethylaminomethyl (cmnm) group at the wobble position (U34) of certain tRNAs, forming tRNA-cmnm(5)s(2)U34. The polypeptide is tRNA uridine 5-carboxymethylaminomethyl modification enzyme MnmG (Desulfitobacterium hafniense (strain Y51)).